A 210-amino-acid polypeptide reads, in one-letter code: uncharacterized protein (210 aa).

The protein resides in the mitochondrion. This is an uncharacterized protein from Schizosaccharomyces pombe (strain 972 / ATCC 24843) (Fission yeast).